The sequence spans 547 residues: Chaperonin GroEL (547 aa).

Residues 30–33 (TLGP), K51, 87–91 (DGTTT), G415, 479–481 (NAA), and D495 contribute to the ATP site.

Belongs to the chaperonin (HSP60) family. As to quaternary structure, forms a cylinder of 14 subunits composed of two heptameric rings stacked back-to-back. Interacts with the co-chaperonin GroES.

It localises to the cytoplasm. It catalyses the reaction ATP + H2O + a folded polypeptide = ADP + phosphate + an unfolded polypeptide.. In terms of biological role, together with its co-chaperonin GroES, plays an essential role in assisting protein folding. The GroEL-GroES system forms a nano-cage that allows encapsulation of the non-native substrate proteins and provides a physical environment optimized to promote and accelerate protein folding. The protein is Chaperonin GroEL of Pseudomonas syringae pv. tomato (strain ATCC BAA-871 / DC3000).